A 268-amino-acid chain; its full sequence is MSRIKSAFERLNGEGRKALIPFITAGDPDAALTLPLMHTLVEAGADVIELGVPFSDPMADGPTIQRASERALARGMTLRKVLQLVVEFRKTDGKTPVVLMGYANPVEAMGLEKFAAAAAQAGVDGVLIVDYPPEEAAAFGAAMKAQGMDPIFLLAPTSSAERIAHVAEIASGYVYYVSLAGVTGSGALNVEAVAERLPLIREKTGLPVGVGFGIRDAATAARIAGIADAVVVGSRIIEEIEKSTAETACANVKALVADIRRGVDEVKK.

Active-site proton acceptor residues include Glu49 and Asp60.

The protein belongs to the TrpA family. In terms of assembly, tetramer of two alpha and two beta chains.

It carries out the reaction (1S,2R)-1-C-(indol-3-yl)glycerol 3-phosphate + L-serine = D-glyceraldehyde 3-phosphate + L-tryptophan + H2O. It participates in amino-acid biosynthesis; L-tryptophan biosynthesis; L-tryptophan from chorismate: step 5/5. The alpha subunit is responsible for the aldol cleavage of indoleglycerol phosphate to indole and glyceraldehyde 3-phosphate. This is Tryptophan synthase alpha chain from Dechloromonas aromatica (strain RCB).